The primary structure comprises 77 residues: Small ribosomal subunit protein uS17 (77 aa).

Belongs to the universal ribosomal protein uS17 family. As to quaternary structure, part of the 30S ribosomal subunit.

In terms of biological role, one of the primary rRNA binding proteins, it binds specifically to the 5'-end of 16S ribosomal RNA. The sequence is that of Small ribosomal subunit protein uS17 from Anaplasma marginale (strain St. Maries).